The chain runs to 5495 residues: Microtubule-associated protein futsch (5495 aa).

20 disordered regions span residues 1–97 (MGDQ…DADG), 656–975 (AKAD…LKEE), 988–1074 (RDEM…AEEE), 1086–1111 (ERKARLEGASARQDESELDVEPEQSK), 1128–1167 (KSRTEEQLAKPAEEELSSPTPEEKLSKKTSDTKDDQIGAP), 1185–1204 (SATIESGATTAPTLPEDERI), 1255–1275 (KDAPKDANAEALGELPDSGER), 1306–1358 (HEEA…EPNK), 1402–1840 (NQED…VVES), 1866–2631 (EIGK…PGFV), 2709–2810 (AKTV…KDFA), 2830–4166 (LPTL…DLSL), 4196–4230 (KAESSPRPAVLSKPAEFSQPDTGHTASTPVDEASP), 4362–4612 (IIPD…ASQL), 4636–4668 (AQKSNKEIKDARETKVTSQFTTTTSSATKDDSL), 4687–4975 (AFST…QMLA), 5035–5065 (KTVTTTDSSEPDSEKVVVTTTRTTSESERDQ), 5101–5138 (SYELQHSSSGVSKRSDLDADGDESQDDIPPQYGSEEHS), 5170–5199 (PSTEPIPIQGAPSGDSQSSESVESSSQTWA), and 5328–5350 (GLPSPAPLPVEGGADIRTTPKKE). A compositionally biased stretch (low complexity) spans 35-48 (AKGAGDGPAQDAAQ). Basic and acidic residues-rich tracts occupy residues 656–672 (AKADSMDTDAEPEHEAD), 696–716 (EPEHEPEAEQDKDVGEEKKVE), and 758–795 (GKADKPRAEVKPVVRSRIDTKPPKSMDRKLAKRDEKKS). Low complexity-rich tracts occupy residues 797-806 (PTTTPAARAP) and 819-831 (PATKSSPSSTPAK). Basic and acidic residues predominate over residues 832–843 (SAKEANNRKVLE). Low complexity predominate over residues 850-888 (RVQATSTVSRRVTSTASERRVQQQAEAKTAATGATQATQ). Over residues 918–931 (KAADLKKTRLDKGG) the composition is skewed to basic and acidic residues. The segment covering 932–942 (TTDSSLVSTPS) has biased composition (polar residues). 2 stretches are compositionally biased toward basic and acidic residues: residues 962–975 (DAEKQRELDDLKEE) and 988–1007 (RDEMKRQQHQQIKAELREMP). Residues 1012–1041 (GDGENEPDEEEEYLIIEKEEVEQYTEDSIV) show a composition bias toward acidic residues. Positions 1047 to 1065 (MTKEEEIQKHQRDSQESEK) are enriched in basic and acidic residues. Basic and acidic residues-rich tracts occupy residues 1128–1140 (KSRTEEQLAKPAE) and 1148–1163 (PEEKLSKKTSDTKDDQ). Positions 1187-1196 (TIESGATTAP) are enriched in polar residues. Basic and acidic residues-rich tracts occupy residues 1306–1319 (HEEADLGLYEKDSQ), 1327–1337 (SHKEESAKEEK), 1343–1358 (KENKVGEIELGDEPNK), and 1408–1443 (EQVKDKEEHEQKIESGIITEKEAKKSASTPEEKETS). Tandem repeats lie at residues 1469–1502 (REDTGSIESPPTIEEAIEVEVQAKQEAQKPVPAP) and 1513–1539 (LASKETSRPESATGSVKEDTEQTKSKK). A 53 X approximate repeat region spans residues 1469–4032 (REDTGSIESP…SPLASKESSR (2564 aa)). Basic and acidic residues-rich tracts occupy residues 1546–1555 (PESEAKDKKS), 1571–1663 (SVKD…DEKS), 1679–1696 (SVKDETEKSKEPSRRESI), 1718–1732 (GIKDESAKPESRRDS), and 1748–1779 (SVKDEPIKSTEKSRRESVAESFKADSTKDEKS). 17 repeat units span residues 1622–1649 (KSALASKEASRPESVTDKSKEPSRRESI), 1660–1686 (DEKSAPPSKEASRPGSVVESVKDETEK), 1690–1718 (PSRRESIAESAKPPIEFREVSRPESVIDG), 1755–1782 (KSTEKSRRESVAESFKADSTKDEKSPLT), 1790–1818 (ESAVENVMDAVGSAERSQPESVTASRDVS), 1837–1865 (VVESVIPASDVVEIEKGAADKEKGVFVSL), 1874–1902 (SEVISRPGPVVESVKPESRRESSTEIVLP), 1911–1939 (PSRPESKVECLKDESEVLKGSTRRESVAE), 1948–1976 (KETSRPESAVGSMKDESMSKEPSRRESVK), 1985–2013 (TSRPASVAESAKDGADDLKELSRPESTTQ), 2022–2050 (DEKSPLASEEASRPASVAESVKDEAEKSK), 2059–2087 (AEKSPLPSKEASRPASVAESIKDEAEKSK), 2096–2124 (AEKSPLPSKEASRPASVAESIKDEAEKSK), 2133–2161 (AEKSPLPSKEASRPASVAESIKDEAEKSK), 2170–2198 (AEKSPLPSKEASRPASVAESIKDEAEKSK), 2215–2243 (KEASRPASVAESIKDEAEKSKEESRRESV), and 2262–2292 (ESIKDEAEKSKEESRRESVAEKSPLPSKEAS). Residues 1804–1815 (ERSQPESVTASR) show a composition bias toward polar residues. Composition is skewed to basic and acidic residues over residues 1887 to 1896 (VKPESRRESS), 1904 to 1942 (HAEDSKEPSRPESKVECLKDESEVLKGSTRRESVAESDK), 1960 to 1976 (MKDESMSKEPSRRESVK), 1994 to 2007 (SAKDGADDLKELSR), 2041 to 2059 (SVKDEAEKSKEESRRESVA), 2078 to 2096 (SIKDEAEKSKEESRRESVA), 2115 to 2133 (SIKDEAEKSKEESRRESVA), 2152 to 2170 (SIKDEAEKSKEESRRESVA), 2189 to 2207 (SIKDEAEKSKEESRRESVA), 2226 to 2244 (SIKDEAEKSKEESRRESVA), 2263 to 2281 (SIKDEAEKSKEESRRESVA), 2300 to 2318 (SIKDEAEKSKEETRRESVA), 2337 to 2355 (SIKDEAEKSKEESRRESAA), 2374 to 2391 (SVKDEADKSKEESRRESM), 2419 to 2435 (SVKDDPVKSKEPSRRES), 2466 to 2482 (SVKDEAEKQESRRESKT), 2560 to 2588 (IKYDLDKPQIIKDDKSTEHSRRESLEDKS), and 2604 to 2627 (SDHEAAVAIEDDAKSSISPKDKSR). Repeat 20 spans residues 2355–2391 (AEKSPLPSKEASRPASVAESVKDEADKSKEESRRESM). 2 tandem repeats follow at residues 2703-2726 (LAQIGAAKTVSSPLDEALRTPSAP) and 2761-2787 (WVAESKDDAAQLKSSVEDLRSPVASTE). A compositionally biased stretch (basic and acidic residues) spans 2764 to 2780 (ESKDDAAQLKSSVEDLR). Position 2800 is a phosphoserine; by GSK3-beta (S2800). 3 consecutive repeat copies span residues 2820-2846 (LPLTIELKGNLPTLSSPVDVAHGDFPQ), 2864-2892 (LSKVDIEKTASSPIDEAPKSLIGCPAEER), and 2907-2933 (VEKSKDASRPPSVVESTKADSTKGDIS). A compositionally biased stretch (low complexity) spans 2845–2861 (PQTSTPTSSPTVASVQP). 2 stretches are compositionally biased toward basic and acidic residues: residues 2889–2914 (AEERPESPAESAKDAAESVEKSKDAS) and 2942–2954 (GPKDDVEKSKESS). Residues 2955–2966 (RPPSVSASITGD) are compositionally biased toward polar residues. Repeat copies occupy residues 2956–2987 (PPSVSASITGDSTKDVSRPASVVESVKDEHDK), 3006–3034 (GKSDSKSSSQDSQKDEKSTLASKEASRRE), 3049–3075 (SRPESVIASGEPVPRESKSPLDSKDTS), 3089–3117 (EKSEQQSRRESVAESVKADTKKDGKSQEA), 3131–3158 (DEKQESRRQSITGSHKAMSTMGDESPMD), 3200–3224 (KSDITKGEKSPLPSKEVSRPESVVG), 3228–3256 (DEKAESRRESVAESVKPESSKDATSAPPS), 3265–3293 (VLGSLKDEGDKTTSRRVSVADSIKDEKSL), 3302–3330 (PESEAESLKDAAAPSQETSRPESVTESVK), 3339–3367 (KEASRPASVAENAKDSADESKEQRPESLP), 3376–3404 (DEKSPLASKDEAEKSKEESRRESVAEQFP), 3413–3441 (PASVAESVKDEAEKSKEESPLMSKEASRP), 3450–3478 (DEAEKSKEESRRESVAEKSPLPSKEASRP), 3487–3515 (DEADKSKEESRRESGAEKSPLASKEASRP), 3524–3552 (DEAEKSKEESRRESVAEKSPLPSKEASRP), 3561–3589 (DEAEKSKEESRRDSVAEKSPLASKEASRP), 3598–3626 (DEAEKSKEESRRESVAEKSPLASKEASRP), 3635–3663 (DEAEKSKEESRRESVAEKSPLASKEASRP), 3672–3700 (DEAEKSKEESSRDSVAEKSPLASKEASRP), 3709–3737 (DEAEKSKEESRRESVAEKSPLASKEASRP), 3746–3774 (DDAEKSKEESRRESVAEKSPLASKEASRP), 3783–3811 (DEAEKSKEESRRESVAEKSPLPSKEASRP), 3820–3848 (DEAEKSKEESRRESVAEKSSLASKKASRP), 3867–3894 (RRESVAEKSPLASKEASRPASVAESVKD), 3895–3921 (EAEKSKEESRRESVAEKSPLPSKEASR), 3931–3958 (DEADKSKEESRRESGAEKSPLASMEASR), 3968–3995 (DETEKSKEESRRESVTEKSPLPSKEASR), and 4005–4032 (DEAEKSKEESRRESVAEKSPLASKESSR). 7 stretches are compositionally biased toward basic and acidic residues: residues 2980-2996 (SVKDEHDKAESRRESIA), 3017-3051 (SQKDEKSTLASKEASRRESVVESSKDDAEKSESRP), 3061-3075 (VPRESKSPLDSKDTS), 3087-3116 (EDEKSEQQSRRESVAESVKADTKKDGKSQE), 3156-3168 (PMDKADKSKEPSR), 3175-3208 (SIKHENTKDEESPLGSRRDSVAESIKSDITKGEK), and 3226-3248 (IKDEKAESRRESVAESVKPESSK). Phosphoserine is present on residues S3067, S3071, and S3075. Residues 3300-3310 (SRPESEAESLK) are compositionally biased toward basic and acidic residues. The segment covering 3316 to 3327 (SQETSRPESVTE) has biased composition (polar residues). 14 stretches are compositionally biased toward basic and acidic residues: residues 3350-3363 (NAKDSADESKEQRP), 3373-3399 (SIKDEKSPLASKDEAEKSKEESRRESV), 3419-3431 (SVKDEAEKSKEES), 3448-3465 (VKDEAEKSKEESRRESVA), 3484-3502 (SVKDEADKSKEESRRESGA), 3521-3539 (SIKDEAEKSKEESRRESVA), 3558-3576 (SVKDEAEKSKEESRRDSVA), 3599-3613 (EAEKSKEESRRESVA), 3632-3650 (SIKDEAEKSKEESRRESVA), 3669-3687 (SVKDEAEKSKEESSRDSVA), 3710-3724 (EAEKSKEESRRESVA), 3743-3761 (SVKDDAEKSKEESRRESVA), 3780-3798 (SVKDEAEKSKEESRRESVA), and 3817-3835 (SVKDEAEKSKEESRRESVA). Low complexity predominate over residues 3836–3850 (EKSSLASKKASRPAS). Basic and acidic residues-rich tracts occupy residues 3854–3872 (SVKDEAEKSKEESRRESVA), 3891–3909 (SVKDEAEKSKEESRRESVA), 3928–3946 (SVKDEADKSKEESRRESGA), 3965–3983 (SVKDETEKSKEESRRESVT), 4002–4020 (SVKDEAEKSKEESRRESVA), 4039–4066 (SIKDEAEGTKQESRRESMPESGKAESIK), 4086–4095 (SVKDETEKPE), and 4115–4141 (AKDEKSPLHSRPESVADKSPDASKEAS). Composition is skewed to polar residues over residues 4142–4152 (RSLSVAETASS) and 4214–4223 (QPDTGHTAST). Composition is skewed to basic and acidic residues over residues 4362–4379 (IIPDFDERQLEEKLKSTA), 4386–4410 (DKSTRDEKSLEISVKVEIESEKSSP), and 4419–4432 (IEEKDKIEQSEKAQ). Residues 4443–4461 (PESVASQPESVPSPSQSAA) are compositionally biased toward low complexity. Residues 4462-4481 (SHEHKEVELSESHKAEKSSR) are compositionally biased toward basic and acidic residues. Residues 4498–4508 (RPASSTSQFST) show a composition bias toward polar residues. The span at 4517-4528 (ESLLHSLTTTET) shows a compositional bias: low complexity. Basic and acidic residues predominate over residues 4529 to 4539 (VETKQMEEKSS). The span at 4540-4560 (FESVSTSVTKSTVLSSQSTVQ) shows a compositional bias: low complexity. Basic and acidic residues-rich tracts occupy residues 4575-4584 (KVEDSSRRES) and 4639-4650 (SNKEIKDARETK). Composition is skewed to low complexity over residues 4651–4662 (VTSQFTTTTSSA) and 4703–4714 (TTASAVSSTSAS). Acidic residues predominate over residues 4744 to 4754 (PEDEEPADDVD). 2 stretches are compositionally biased toward basic and acidic residues: residues 4755-4764 (ERSSVKESRS) and 4788-4798 (LVEEEHEHVEE). Over residues 4804–4829 (TSTSKTTTLLQSSEQSSTTTSSTSKT) the composition is skewed to low complexity. Over residues 4835-4851 (ESITLTQMDQQTSQSQG) the composition is skewed to polar residues. Low complexity predominate over residues 4875-4905 (GSAGSVIGAGAGAVAAGGKCESSAASIVSSS). Residues 4915-4930 (GKSSPGALTSESQSIP) are compositionally biased toward polar residues. The residue at position 4950 (S4950) is a Phosphoserine; by GSK3-beta. Positions 4955 to 4970 (VSKDELKSLEMQHHSQ) are enriched in basic and acidic residues. Residues 5101-5112 (SYELQHSSSGVS) are compositionally biased toward polar residues. Over residues 5185 to 5196 (SQSSESVESSSQ) the composition is skewed to low complexity.

Heterodimer of a heavy and a light chain. Interacts with Fmr1. Found in a complex with tubulin and Futsch. In terms of processing, several minor light chains can be created with markedly different pIs. Post-translationally, phosphorylated by SGG/GSK3. Phosphorylated by LRRK2 at the presynapse of neuromuscular junctions, which negatively regulates the activity controlling synaptic differentiation. As to expression, neuronal cells within the PNS and CNS.

It is found in the cytoplasm. Its subcellular location is the cytoskeleton. In terms of biological role, during embryogenesis, necessary for dendritic and axonal organization and growth at the neuromuscular junction through the regulation of the synaptic microtubule cytoskeleton. Microtubule hairpin loops are found within a small subset of synaptic boutons at the neuromuscular synapse, these loops are stabilized by futsch. Loop morphology and dynamics suggest that rearrangement of these microtubule-based loops is a critical component of the process of bouton division and for subsequent nerve-terminal growth and branching. Translation is repressed by Fmr1. Together with ringer, required for neuromuscular junction (NMJ) bouton growth by regulating synaptic microtubules. Function with ringer in maintaining microtubule stability and dynamics, is essential for promoting axon regeneration in response to peripheral (PNS) and central nervous system (CNS) injury. In response to axotomy, acts downstream of a stress response cascade involving Xbp1 splicing, to control axon regeneration. In Drosophila melanogaster (Fruit fly), this protein is Microtubule-associated protein futsch (futsch).